A 122-amino-acid polypeptide reads, in one-letter code: Atrial gland peptide B (122 aa).

The N-terminal stretch at 1–21 (MKANTMFIILCLTLSTLCVSS) is a signal peptide. A propeptide spanning residues 22–34 (QFTSVLGKIFVTN) is cleaved from the precursor. Ile69 carries the post-translational modification Isoleucine amide. A propeptide spanning residues 73-122 (AAGGMEQSEGQNPETKSHSWRERSVLTPSLLSLGESLESGISKRISINQD) is cleaved from the precursor. The disordered stretch occupies residues 74-95 (AGGMEQSEGQNPETKSHSWRER).

The protein belongs to the molluscan ELH family.

The protein resides in the secreted. The atrial gland peptide A and peptide B precursors are the source of the 2 peptides that, upon release from this reproductive system gland, initiate the egg-laying process by exciting the bag cell neurons. These neurons, clustered in neural connectives near the abdominal ganglion, in turn release other peptides that act directly on the ganglion and also, via the circulating hemolymph, on many other organs to control the physiological processes of egg-laying. One of these other peptides is the egg-laying hormone. This Aplysia californica (California sea hare) protein is Atrial gland peptide B.